The chain runs to 1070 residues: TSC22 domain family protein 1 (1070 aa).

Positions 1–98 (MHQPPESTAA…SQAQLQAQPL (98 aa)) are required for interaction with TGFBR1 and promotion of TGF-beta signaling. Disordered regions lie at residues 1–110 (MHQP…KKSG), 125–289 (ISSN…PASV), 458–487 (VTSERESTSGSSVSSSVSTRSHYTESVGSG), 604–637 (YSQAAPPVQTPLPGAPPPQQLQYGQQQPMVSTQM), and 830–858 (TSQVSSAGPSGMPSAPTNLVPPQNIAQTP). Low complexity predominate over residues 36–45 (GSASALNAAG). Residues 58–70 (FPPPSLLQPPPPA) are compositionally biased toward pro residues. The span at 84-100 (SLNLLSQAQLQAQPLAP) shows a compositional bias: low complexity. The segment covering 133–142 (EDTESYDDLD) has biased composition (acidic residues). The span at 216 to 240 (HPHHLHHHHHIHHGHHLQHGHHHPS) shows a compositional bias: basic residues. Over residues 241–250 (HVAVASASIP) the composition is skewed to low complexity. Residues 261–271 (KLSTTGSSDSI) show a composition bias toward polar residues. Position 263 is a phosphoserine (serine 263). Low complexity-rich tracts occupy residues 272-289 (TPVAPTSAVSSSGSPASV) and 465-478 (TSGSSVSSSVSTRS). The segment covering 611 to 622 (VQTPLPGAPPPQ) has biased composition (pro residues). Residues 830-845 (TSQVSSAGPSGMPSAP) show a composition bias toward low complexity. A compositionally biased stretch (polar residues) spans 849–858 (VPPQNIAQTP). The interval 1003–1024 (LKEQIKELIEKNSQLEQENNLL) is leucine-zipper. Residues 1034–1070 (AQFQAQLQTGSPPATTQPQGTTQPPAQPASQGSGPTA) form a disordered region. A compositionally biased stretch (low complexity) spans 1041-1070 (QTGSPPATTQPQGTTQPPAQPASQGSGPTA).

This sequence belongs to the TSC-22/Dip/Bun family. In terms of assembly, forms homodimers. Forms heterodimers. Component of a complex composed of TSC22D1 (via N-terminus), TGFBR1 and TGFBR2; the interaction between TSC22D1 and TGFBR1 is inhibited by SMAD7 and promoted by TGFB1. Interacts with SMAD7; the interaction requires TGF-beta and the interaction is inhibited by TGFBR1. Interacts with TPT1/fortilin; interaction results in the destabilization of TSC22D1 protein and prevents TSC22D1-mediated apoptosis. Interacts with SMAD4 (via N-terminus). Interacts with ACVRL1/ALK1, ACVR1/ALK2, BMPR1A/ALK3, ACVR1B/ALK4, BMPR1B/ALK6, ACVR2A/ACTRII, and BMPR2. Interacts with SMAD6. Interacts with TFE3; the interaction is enhanced in the presence of TGF-beta. Forms a heterodimer with TSC22D4/THG1. As to quaternary structure, forms a heterodimer with TSC22D4/THG1. Interacts with histone H1-2. Interacts with GNL3.

Its subcellular location is the cytoplasm. The protein resides in the nucleus. It is found in the cell membrane. It localises to the mitochondrion. Its function is as follows. Transcriptional repressor. Acts on the C-type natriuretic peptide (CNP) promoter. Acts to promote CASP3-mediated apoptosis. Positively regulates TGF-beta signaling by interacting with SMAD7 which inhibits binding of SMAD7 to TGFBR1, preventing recruitment of SMURF ubiquitin ligases to TGFBR1 and inhibiting SMURF-mediated ubiquitination and degradation of TGFBR1. Contributes to enhancement of TGF-beta signaling by binding to and modulating the transcription activator activity of SMAD4. Promotes TGF-beta-induced transcription of COL1A2; via its interaction with TFE3 at E-boxes in the gene proximal promoter. Plays a role in the repression of hematopoietic precursor cell growth. Promotes IL2 deprivation-induced apoptosis in T-lymphocytes, via repression of TSC22D3/GILZ transcription and activation of the caspase cascade. Functionally, may act to negatively regulate TGFB3 signaling and thereby inhibit cell death in mammary gland cells. In terms of biological role, positively regulates cell death in response to TGFB3 during mammary gland involution. This is TSC22 domain family protein 1 from Pongo abelii (Sumatran orangutan).